A 291-amino-acid chain; its full sequence is Elongation factor Ts (291 aa).

An involved in Mg(2+) ion dislocation from EF-Tu region spans residues 80-83 (TDFV).

Belongs to the EF-Ts family.

The protein resides in the cytoplasm. Associates with the EF-Tu.GDP complex and induces the exchange of GDP to GTP. It remains bound to the aminoacyl-tRNA.EF-Tu.GTP complex up to the GTP hydrolysis stage on the ribosome. This is Elongation factor Ts from Acinetobacter baumannii (strain AB307-0294).